Reading from the N-terminus, the 349-residue chain is 4-hydroxy-3-methylbut-2-en-1-yl diphosphate synthase (flavodoxin) (349 aa).

Residues cysteine 264, cysteine 267, cysteine 299, and glutamate 306 each coordinate [4Fe-4S] cluster.

The protein belongs to the IspG family. Requires [4Fe-4S] cluster as cofactor.

The enzyme catalyses (2E)-4-hydroxy-3-methylbut-2-enyl diphosphate + oxidized [flavodoxin] + H2O + 2 H(+) = 2-C-methyl-D-erythritol 2,4-cyclic diphosphate + reduced [flavodoxin]. Its pathway is isoprenoid biosynthesis; isopentenyl diphosphate biosynthesis via DXP pathway; isopentenyl diphosphate from 1-deoxy-D-xylulose 5-phosphate: step 5/6. Functionally, converts 2C-methyl-D-erythritol 2,4-cyclodiphosphate (ME-2,4cPP) into 1-hydroxy-2-methyl-2-(E)-butenyl 4-diphosphate. The chain is 4-hydroxy-3-methylbut-2-en-1-yl diphosphate synthase (flavodoxin) from Clostridium acetobutylicum (strain ATCC 824 / DSM 792 / JCM 1419 / IAM 19013 / LMG 5710 / NBRC 13948 / NRRL B-527 / VKM B-1787 / 2291 / W).